We begin with the raw amino-acid sequence, 593 residues long: Monoterpene synthase 7, chloroplastic (593 aa).

Residues 1-39 (MSVSLSFAASATFGFRGGLGGFSRPAAAIKQWRCLPRIQ) constitute a chloroplast transit peptide. Mg(2+)-binding residues include Asp-348, Asp-352, Asp-491, and Glu-499. The DDXXD motif motif lies at 348-352 (DDVYD).

The protein belongs to the terpene synthase family. Tpsa subfamily. Mg(2+) is required as a cofactor. Mn(2+) serves as cofactor. Highly expressed in flowers, petals and sepals, but almost undetectable in vegetative organs.

It is found in the plastid. The protein localises to the chloroplast. It carries out the reaction (2E)-geranyl diphosphate = sabinene + diphosphate. The enzyme catalyses (2E)-geranyl diphosphate = terpinolene + diphosphate. It catalyses the reaction (2E)-geranyl diphosphate = alpha-pinene + diphosphate. The catalysed reaction is (2E)-geranyl diphosphate = beta-pinene + diphosphate. It carries out the reaction (2E)-geranyl diphosphate = beta-myrcene + diphosphate. The enzyme catalyses (2E)-geranyl diphosphate = alpha-terpinene + diphosphate. It catalyses the reaction (2E)-geranyl diphosphate = beta-phellandrene + diphosphate. The catalysed reaction is (2E)-geranyl diphosphate = gamma-terpinene + diphosphate. It participates in secondary metabolite biosynthesis; terpenoid biosynthesis. Monoterpene synthase involved in the biosynthesis of volatile compounds present in floral scent. Mediates the conversion of (2E)-geranyl diphosphate (GPP) into sabinene and sub-products such as alpha-thujene, alpha-pinene, beta-pinene, myrcene, alpha-phellandrene, alpha-terpinene, beta-phellandrene, gamma-terpinene and terpinolene. Unable to use farnesyl diphosphate (FPP) as substrate. The chain is Monoterpene synthase 7, chloroplastic from Hedychium coronarium (White butterfly ginger-lily).